A 253-amino-acid polypeptide reads, in one-letter code: tRNA pseudouridine synthase A (253 aa).

D51 acts as the Nucleophile in catalysis. Position 110 (Y110) interacts with substrate.

The protein belongs to the tRNA pseudouridine synthase TruA family. In terms of assembly, homodimer.

The catalysed reaction is uridine(38/39/40) in tRNA = pseudouridine(38/39/40) in tRNA. Functionally, formation of pseudouridine at positions 38, 39 and 40 in the anticodon stem and loop of transfer RNAs. The sequence is that of tRNA pseudouridine synthase A from Wolinella succinogenes (strain ATCC 29543 / DSM 1740 / CCUG 13145 / JCM 31913 / LMG 7466 / NCTC 11488 / FDC 602W) (Vibrio succinogenes).